A 392-amino-acid chain; its full sequence is Isocitrate dehydrogenase [NAD] subunit gamma, mitochondrial (392 aa).

The N-terminal 39 residues, 1 to 39 (MALKVATAAGGAVKAALRPALLWRPWEVLGSHEAPRRSF), are a transit peptide targeting the mitochondrion. Citrate-binding residues include Thr-119 and Asn-132. Arg-135, Arg-166, and Asp-253 together coordinate substrate. Residue Asp-253 coordinates Mn(2+). Positions 311, 312, and 323 each coordinate ADP.

Belongs to the isocitrate and isopropylmalate dehydrogenases family. As to quaternary structure, heterooligomer of subunits alpha (IDH3A), beta (IDH3B), and gamma (IDH3G) in the apparent ratio of 2:1:1. The heterodimer containing one IDH3A and one IDH3B subunit and the heterodimer containing one IDH3A and one IDH3G subunit assemble into a heterotetramer (which contains two subunits of IDH3A, one of IDH3B and one of IDH3G) and further into the heterooctamer. Requires Mg(2+) as cofactor. The cofactor is Mn(2+).

It localises to the mitochondrion. The heterotetramer and the heterodimer composed of IDH3A and IDH3G subunits can be allosterically activated by citrate (CIT) or/and ADP, and the two activators can act independently or synergistically. The heterodimer composed of IDH3A and IDH3B subunits cannot be allosterically regulated and the allosteric regulation of the heterotetramer is through the IDH3G subunit and not the IDH3B subunit. The IDH3G subunit contains the allosteric site which consists of a CIT-binding site and an ADP-binding site, and the binding of CIT and ADP causes conformational changes at the allosteric site which are transmitted to the active site in the catalytic subunit (IDH3A) through a cascade of conformational changes at the heterodimer interface, leading to stabilization of the isocitrate-binding at the active site and thus activation of the enzyme. ATP can activate the heterotetramer and the heterodimer composed of IDH3A and IDH3G subunits at low concentrations but inhibits their activities at high concentrations, whereas ATP exhibits only inhibitory effect on the heterodimer composed of IDH3A and IDH3B subunits. Its function is as follows. Regulatory subunit which plays a role in the allosteric regulation of the enzyme catalyzing the decarboxylation of isocitrate (ICT) into alpha-ketoglutarate. The heterodimer composed of the alpha (IDH3A) and beta (IDH3B) subunits and the heterodimer composed of the alpha (IDH3A) and gamma (IDH3G) subunits, have considerable basal activity but the full activity of the heterotetramer (containing two subunits of IDH3A, one of IDH3B and one of IDH3G) requires the assembly and cooperative function of both heterodimers. The protein is Isocitrate dehydrogenase [NAD] subunit gamma, mitochondrial (IDH3G) of Bos taurus (Bovine).